A 197-amino-acid chain; its full sequence is Small ribosomal subunit protein uS4B (197 aa).

The region spanning 88 to 150 (SRLDNMVYRM…SRKTEMFVNN (63 aa)) is the S4 RNA-binding domain.

It belongs to the universal ribosomal protein uS4 family. Part of the 30S ribosomal subunit. Contacts protein S5. The interaction surface between S4 and S5 is involved in control of translational fidelity.

Functionally, one of the primary rRNA binding proteins, it binds directly to 16S rRNA where it nucleates assembly of the body of the 30S subunit. In terms of biological role, with S5 and S12 plays an important role in translational accuracy. The protein is Small ribosomal subunit protein uS4B of Clostridium perfringens (strain SM101 / Type A).